Consider the following 261-residue polypeptide: Undecaprenyl-diphosphatase (261 aa).

The next 7 helical transmembrane spans lie at Arg-38–Phe-58, Arg-75–Val-95, Ile-106–Val-126, Val-136–Gly-156, Phe-181–Leu-201, Val-217–Ile-237, and Ser-241–Thr-261.

Belongs to the UppP family.

It is found in the cell inner membrane. It catalyses the reaction di-trans,octa-cis-undecaprenyl diphosphate + H2O = di-trans,octa-cis-undecaprenyl phosphate + phosphate + H(+). Functionally, catalyzes the dephosphorylation of undecaprenyl diphosphate (UPP). Confers resistance to bacitracin. The chain is Undecaprenyl-diphosphatase from Xylella fastidiosa (strain Temecula1 / ATCC 700964).